A 205-amino-acid polypeptide reads, in one-letter code: Thiamine-phosphate synthase (205 aa).

4-amino-2-methyl-5-(diphosphooxymethyl)pyrimidine-binding positions include 35–39 (QYRDK) and Asn-67. Asp-68 and Asp-86 together coordinate Mg(2+). Thr-105 is a binding site for 4-amino-2-methyl-5-(diphosphooxymethyl)pyrimidine. Position 132-134 (132-134 (SLT)) interacts with 2-[(2R,5Z)-2-carboxy-4-methylthiazol-5(2H)-ylidene]ethyl phosphate. Lys-135 provides a ligand contact to 4-amino-2-methyl-5-(diphosphooxymethyl)pyrimidine. Gly-162 provides a ligand contact to 2-[(2R,5Z)-2-carboxy-4-methylthiazol-5(2H)-ylidene]ethyl phosphate.

Belongs to the thiamine-phosphate synthase family. It depends on Mg(2+) as a cofactor.

The enzyme catalyses 2-[(2R,5Z)-2-carboxy-4-methylthiazol-5(2H)-ylidene]ethyl phosphate + 4-amino-2-methyl-5-(diphosphooxymethyl)pyrimidine + 2 H(+) = thiamine phosphate + CO2 + diphosphate. The catalysed reaction is 2-(2-carboxy-4-methylthiazol-5-yl)ethyl phosphate + 4-amino-2-methyl-5-(diphosphooxymethyl)pyrimidine + 2 H(+) = thiamine phosphate + CO2 + diphosphate. It catalyses the reaction 4-methyl-5-(2-phosphooxyethyl)-thiazole + 4-amino-2-methyl-5-(diphosphooxymethyl)pyrimidine + H(+) = thiamine phosphate + diphosphate. The protein operates within cofactor biosynthesis; thiamine diphosphate biosynthesis; thiamine phosphate from 4-amino-2-methyl-5-diphosphomethylpyrimidine and 4-methyl-5-(2-phosphoethyl)-thiazole: step 1/1. In terms of biological role, condenses 4-methyl-5-(beta-hydroxyethyl)thiazole monophosphate (THZ-P) and 2-methyl-4-amino-5-hydroxymethyl pyrimidine pyrophosphate (HMP-PP) to form thiamine monophosphate (TMP). This chain is Thiamine-phosphate synthase, found in Pseudomonas savastanoi pv. phaseolicola (strain 1448A / Race 6) (Pseudomonas syringae pv. phaseolicola (strain 1448A / Race 6)).